The chain runs to 356 residues: Holliday junction branch migration complex subunit RuvB (356 aa).

The interval 4–192 (DDTTDATADE…FGFTAHMEFY (189 aa)) is large ATPase domain (RuvB-L). ATP contacts are provided by residues L31, R32, G73, K76, T77, T78, 139-141 (EDF), R182, Y192, and R229. Mg(2+) is bound at residue T77. The segment at 193–263 (EPHELERVIH…IAAAALKVYE (71 aa)) is small ATPAse domain (RuvB-S). The segment at 266 to 356 (ARGLDRLDRG…GNGQGDLFGA (91 aa)) is head domain (RuvB-H). Residues R302, R321, and R326 each coordinate DNA.

This sequence belongs to the RuvB family. Homohexamer. Forms an RuvA(8)-RuvB(12)-Holliday junction (HJ) complex. HJ DNA is sandwiched between 2 RuvA tetramers; dsDNA enters through RuvA and exits via RuvB. An RuvB hexamer assembles on each DNA strand where it exits the tetramer. Each RuvB hexamer is contacted by two RuvA subunits (via domain III) on 2 adjacent RuvB subunits; this complex drives branch migration. In the full resolvosome a probable DNA-RuvA(4)-RuvB(12)-RuvC(2) complex forms which resolves the HJ.

It is found in the cytoplasm. The enzyme catalyses ATP + H2O = ADP + phosphate + H(+). In terms of biological role, the RuvA-RuvB-RuvC complex processes Holliday junction (HJ) DNA during genetic recombination and DNA repair, while the RuvA-RuvB complex plays an important role in the rescue of blocked DNA replication forks via replication fork reversal (RFR). RuvA specifically binds to HJ cruciform DNA, conferring on it an open structure. The RuvB hexamer acts as an ATP-dependent pump, pulling dsDNA into and through the RuvAB complex. RuvB forms 2 homohexamers on either side of HJ DNA bound by 1 or 2 RuvA tetramers; 4 subunits per hexamer contact DNA at a time. Coordinated motions by a converter formed by DNA-disengaged RuvB subunits stimulates ATP hydrolysis and nucleotide exchange. Immobilization of the converter enables RuvB to convert the ATP-contained energy into a lever motion, pulling 2 nucleotides of DNA out of the RuvA tetramer per ATP hydrolyzed, thus driving DNA branch migration. The RuvB motors rotate together with the DNA substrate, which together with the progressing nucleotide cycle form the mechanistic basis for DNA recombination by continuous HJ branch migration. Branch migration allows RuvC to scan DNA until it finds its consensus sequence, where it cleaves and resolves cruciform DNA. This chain is Holliday junction branch migration complex subunit RuvB, found in Streptomyces avermitilis (strain ATCC 31267 / DSM 46492 / JCM 5070 / NBRC 14893 / NCIMB 12804 / NRRL 8165 / MA-4680).